A 569-amino-acid polypeptide reads, in one-letter code: Peptide transporter PTR_C (569 aa).

Over residues 1 to 25 (MSQNVDEKVVHDDASVIRSVDRSES) the composition is skewed to basic and acidic residues. The segment at 1 to 43 (MSQNVDEKVVHDDASVIRSVDRSESDSYPDSVSPEGAEPSEEE) is disordered. The chain crosses the membrane as a helical span at residues 54–74 (VPLACWLVAIVELAERFSYYG). Asparagine 98 is a glycosylation site (N-linked (GlcNAc...) asparagine). 3 helical membrane passes run 104–124 (ALSYFWQFWCYVTPIFGAWVA), 134–154 (ISIFCVLYIIGILILFVTSLP), and 159–179 (NTSLGGFITAVIVIGIGTGGV). A glycan (N-linked (GlcNAc...) asparagine) is linked at asparagine 212. Transmembrane regions (helical) follow at residues 215–235 (IQNVFMFFYLMINIGSLSVIA), 245–265 (FWAAYLLPLCFFVIALLALFL), 322–342 (ALYACKVFLIYPIYWLVYGQM), 366–386 (IDSITIIIFIPICESIVYPFI), 398–418 (IFWGFMFGAAAMVYAAVLQHF), 444–464 (VALQTPAYFLIAISEILASIT), 479–499 (SFIMSIFLVQNAFGSALGIAL), and 510–530 (WTYTGLAVSCFIAGWVFWFLF).

Belongs to the major facilitator superfamily. Proton-dependent oligopeptide transporter (POT/PTR) (TC 2.A.17) family.

The protein resides in the cell membrane. It carries out the reaction a dipeptide(out) + H(+)(out) = a dipeptide(in) + H(+)(in). The enzyme catalyses an L-amino acid tripeptide(out) + H(+)(out) = an L-amino acid tripeptide(in) + H(+)(in). Functionally, peptide transporter that exploits the inwardly directed proton motive force to facilitate the cellular uptake of di/tripeptides. Shows strong uptake specificity towards the dipeptides Tyr-Phe and Leu-Gly and the tripeptide Phe-Gly-Gly, when compared to PTR_A and PTR_B. Also able to import peptide-based antifungals such as the peptide-nucleoside drug nikkomycin Z as well as the glucosamine-6-phosphate synthase inhibitor, L-norvalyl-N3-(4-methoxyfumaroyl)-L-2,3-diaminopropionoic acid (Nva-FMDP). The polypeptide is Peptide transporter PTR_C (Candidozyma auris (Yeast)).